The sequence spans 687 residues: Probable ATP-dependent RNA helicase Dbp73D (687 aa).

Disordered regions lie at residues 1 to 26 and 52 to 87; these read MELF…TNNE and TPIL…EEDV. Composition is skewed to basic and acidic residues over residues 9–18 and 54–79; these read YTEDLKEQKD and ILEK…EKPL. The Q motif motif lies at 160–168; the sequence is LFPVQKQVI. Positions 177 to 381 constitute a Helicase ATP-binding domain; that stretch reads KPPPFRPRDI…DLRLFQPRLF (205 aa). 190–197 lines the ATP pocket; that stretch reads APTGSGKT. Residues 305 to 308 carry the DEAD box motif; it reads DEAD. Positions 434–583 constitute a Helicase C-terminal domain; it reads TVFALVEKYK…EIHVSPDIEI (150 aa). Residues 646-675 are disordered; sequence IVQSSKKSSETKNSKTKADKTKYQPKETKK. Residues 652 to 675 show a composition bias toward basic and acidic residues; it reads KSSETKNSKTKADKTKYQPKETKK.

It belongs to the DEAD box helicase family. DDX51/DBP6 subfamily. In terms of tissue distribution, expressed in the germline tissue of the ovary.

The protein resides in the nucleus. It is found in the nucleolus. The catalysed reaction is ATP + H2O = ADP + phosphate + H(+). Its function is as follows. ATP-binding RNA helicase involved in the biogenesis of 60S ribosomal subunits. The sequence is that of Probable ATP-dependent RNA helicase Dbp73D (Dbp73D) from Drosophila melanogaster (Fruit fly).